The sequence spans 292 residues: ATP synthase gamma chain (292 aa).

Belongs to the ATPase gamma chain family. F-type ATPases have 2 components, CF(1) - the catalytic core - and CF(0) - the membrane proton channel. CF(1) has five subunits: alpha(3), beta(3), gamma(1), delta(1), epsilon(1). CF(0) has three main subunits: a, b and c.

The protein resides in the cell inner membrane. Functionally, produces ATP from ADP in the presence of a proton gradient across the membrane. The gamma chain is believed to be important in regulating ATPase activity and the flow of protons through the CF(0) complex. This is ATP synthase gamma chain from Brucella anthropi (strain ATCC 49188 / DSM 6882 / CCUG 24695 / JCM 21032 / LMG 3331 / NBRC 15819 / NCTC 12168 / Alc 37) (Ochrobactrum anthropi).